Reading from the N-terminus, the 236-residue chain is Carboxymethylenebutenolidase (236 aa).

Catalysis depends on residues Cys123, Asp171, and His202.

It belongs to the dienelactone hydrolase family. Monomer.

The enzyme catalyses 2-(5-oxo-2,5-dihydrofuran-2-ylidene)acetate + H2O = 4-oxohex-2-enedioate + H(+). It functions in the pathway aromatic compound metabolism; 3-chlorocatechol degradation. Functionally, ring cleavage of cyclic ester dienelactone to produce maleylacetate. This Pseudomonas knackmussii (strain DSM 6978 / CCUG 54928 / LMG 23759 / B13) protein is Carboxymethylenebutenolidase (clcD).